Reading from the N-terminus, the 2309-residue chain is Collagen alpha-4(VI) chain (2309 aa).

An N-terminal signal peptide occupies residues 1-22 (MGTWKTFWLIISLAAGLGFVKS). A nonhelical region region spans residues 21–1410 (KSQRIVCREA…TCCNMYAKCY (1390 aa)). 6 VWFA domains span residues 34 to 206 (DIVF…AQKL), 235 to 413 (DIVF…LQAL), 430 to 653 (DVVF…FQRV), 634 to 811 (DLVF…GNKL), 849 to 1018 (DIYF…IRDI), and 1030 to 1199 (DIIF…EKEI). Residue Asn188 is glycosylated (N-linked (GlcNAc...) asparagine). An N-linked (GlcNAc...) asparagine glycan is attached at Asn754. N-linked (GlcNAc...) asparagine glycosylation occurs at Asn1114. The tract at residues 1411–1744 (GDDGIRGEPG…GKMGTKGSKG (334 aa)) is triple-helical region. The segment covering 1414-1430 (GIRGEPGSRGEQGERGL) has biased composition (basic and acidic residues). The tract at residues 1414–1746 (GIRGEPGSRG…MGTKGSKGLA (333 aa)) is disordered. Gly residues predominate over residues 1480 to 1489 (GEEGVGGLDG). Residues 1527 to 1529 (RGD) carry the Cell attachment site motif. Low complexity-rich tracts occupy residues 1605–1621 (PRGR…KGDP) and 1650–1669 (PAGE…PGLF). The tract at residues 1745–2309 (LADRTPCEIV…EGECLNYVLK (565 aa)) is nonhelical region. VWFA domains follow at residues 1776–1957 (EVVF…ASCT) and 1982–2187 (DLVF…LNLL). The Cell attachment site signature appears at 2208–2210 (RGD). The segment at 2262 to 2300 (ALGSHGKDRADTEDIDQETPAKGRHLGPTHGPCPMGPEE) is disordered.

Belongs to the type VI collagen family. Trimers composed of three different chains: alpha-1(VI), alpha-2(VI), and alpha-3(VI) or alpha-4(VI) or alpha-5(VI) or alpha-6(VI). Post-translationally, prolines at the third position of the tripeptide repeating unit (G-X-Y) are hydroxylated in some or all of the chains. As to expression, in newborn, it is expressed in lung, kidney, brain, intestine, skin, sternum and, at weak level, calvaria. In adult, it is almost absent with some weak expression in ovary and very weak expression in spleen, lung, uterus and brain.

The protein resides in the secreted. It localises to the extracellular space. Its subcellular location is the extracellular matrix. Its function is as follows. Collagen VI acts as a cell-binding protein. The chain is Collagen alpha-4(VI) chain (Col6a4) from Mus musculus (Mouse).